Reading from the N-terminus, the 126-residue chain is UPF0102 protein Cphamn1_0017 (126 aa).

The protein belongs to the UPF0102 family.

This chain is UPF0102 protein Cphamn1_0017, found in Chlorobium phaeobacteroides (strain BS1).